A 138-amino-acid chain; its full sequence is Acidic phospholipase A2 BmooPLA2 (138 aa).

The signal sequence occupies residues 1 to 16; sequence MRTLWIVAVLLLGVEG. 7 disulfides stabilise this stretch: Cys42–Cys131, Cys44–Cys60, Cys59–Cys111, Cys65–Cys138, Cys66–Cys104, Cys73–Cys97, and Cys91–Cys102. Ca(2+)-binding residues include Tyr43, Gly45, and Gly47. Residue His63 is part of the active site. Ca(2+) is bound at residue Asp64. Asp105 is a catalytic residue.

It belongs to the phospholipase A2 family. Group II subfamily. D49 sub-subfamily. Requires Ca(2+) as cofactor. As to expression, expressed by the venom gland.

It localises to the secreted. It catalyses the reaction a 1,2-diacyl-sn-glycero-3-phosphocholine + H2O = a 1-acyl-sn-glycero-3-phosphocholine + a fatty acid + H(+). Functionally, snake venom phospholipase A2 (PLA2) that inhibits ADP- and collagen-induced platelet aggregation, has edema-inducing, anti-coagulant activity, antibacterial activity, and cytotoxic activity. In vivo, has a hypotensive effect. PLA2 catalyzes the calcium-dependent hydrolysis of the 2-acyl groups in 3-sn-phosphoglycerides. The polypeptide is Acidic phospholipase A2 BmooPLA2 (Bothrops moojeni (Lance-headed viper)).